Here is a 308-residue protein sequence, read N- to C-terminus: Probable peptidyl-prolyl cis-trans isomerase B (308 aa).

The disordered stretch occupies residues 74-123; it reads DHQSTTSATPTDSASTSPPQAATAPPLPPFKPSANLGANCQYPPSPDKAV. The span at 77–97 shows a compositional bias: low complexity; the sequence is STTSATPTDSASTSPPQAATA. The PPIase cyclophilin-type domain occupies 139–307; sequence AQVSVSMVTN…TEVTITSVLL (169 aa).

The protein belongs to the cyclophilin-type PPIase family.

It catalyses the reaction [protein]-peptidylproline (omega=180) = [protein]-peptidylproline (omega=0). Its function is as follows. PPIases accelerate the folding of proteins. It catalyzes the cis-trans isomerization of proline imidic peptide bonds in oligopeptides. In Mycobacterium tuberculosis (strain CDC 1551 / Oshkosh), this protein is Probable peptidyl-prolyl cis-trans isomerase B (ppiB).